Here is a 411-residue protein sequence, read N- to C-terminus: Exodeoxyribonuclease 7 large subunit (411 aa).

It belongs to the XseA family. As to quaternary structure, heterooligomer composed of large and small subunits.

It is found in the cytoplasm. It carries out the reaction Exonucleolytic cleavage in either 5'- to 3'- or 3'- to 5'-direction to yield nucleoside 5'-phosphates.. Bidirectionally degrades single-stranded DNA into large acid-insoluble oligonucleotides, which are then degraded further into small acid-soluble oligonucleotides. The chain is Exodeoxyribonuclease 7 large subunit from Mycobacterium sp. (strain JLS).